The following is a 259-amino-acid chain: uncharacterized protein (259 aa).

This is an uncharacterized protein from Bacillus anthracis.